Here is a 421-residue protein sequence, read N- to C-terminus: U-box domain-containing protein 26 (421 aa).

In terms of domain architecture, U-box spans 13-87; that stretch reads QIPYHFRCPI…QEWCVANRSN (75 aa).

The catalysed reaction is S-ubiquitinyl-[E2 ubiquitin-conjugating enzyme]-L-cysteine + [acceptor protein]-L-lysine = [E2 ubiquitin-conjugating enzyme]-L-cysteine + N(6)-ubiquitinyl-[acceptor protein]-L-lysine.. The protein operates within protein modification; protein ubiquitination. Functionally, functions as an E3 ubiquitin ligase. This chain is U-box domain-containing protein 26 (PUB26), found in Arabidopsis thaliana (Mouse-ear cress).